Reading from the N-terminus, the 151-residue chain is MTTNTHTLQIEEILELLPHRFPFLLVDRVLDFEEGRFLRAVKNVSVNEPFFQGHFPGKPILPGVLILEAMAQATGILAFKSVGKLEPGELYYFAGIDEARFKRPVVPGDQMIMEVTFEKTRRGLTRFKGVALVDGKVVCEATMMCARSREA.

His-54 is an active-site residue.

Belongs to the thioester dehydratase family. FabZ subfamily.

Its subcellular location is the cytoplasm. The enzyme catalyses a (3R)-hydroxyacyl-[ACP] = a (2E)-enoyl-[ACP] + H2O. In terms of biological role, involved in unsaturated fatty acids biosynthesis. Catalyzes the dehydration of short chain beta-hydroxyacyl-ACPs and long chain saturated and unsaturated beta-hydroxyacyl-ACPs. In Salmonella agona (strain SL483), this protein is 3-hydroxyacyl-[acyl-carrier-protein] dehydratase FabZ.